Consider the following 234-residue polypeptide: Small ribosomal subunit protein uS3 (234 aa).

Residues 39–107 (IRKFLKKELY…EVSINIKEVK (69 aa)) form the KH type-2 domain.

It belongs to the universal ribosomal protein uS3 family. Part of the 30S ribosomal subunit. Forms a tight complex with proteins S10 and S14.

In terms of biological role, binds the lower part of the 30S subunit head. Binds mRNA in the 70S ribosome, positioning it for translation. The sequence is that of Small ribosomal subunit protein uS3 from Helicobacter acinonychis (strain Sheeba).